The following is a 507-amino-acid chain: 3-[(3aS,4S,7aS)-7a-methyl-1,5-dioxo-octahydro-1H-inden-4-yl]propanoyl:CoA ligase (507 aa).

ATP is bound by residues 177–185 (TSGTTGRSK), aspartate 391, arginine 406, and lysine 497.

It belongs to the ATP-dependent AMP-binding enzyme family.

It catalyses the reaction 3-[(3aS,4S,7aS)-7a-methyl-1,5-dioxo-octahydro-1H-inden-4-yl]propanoate + ATP + CoA = 3-[(3aS,4S,7aS)-7a-methyl-1,5-dioxo-octahydro-1H-inden-4-yl]propanoyl-CoA + AMP + diphosphate. It carries out the reaction 5-hydroxy-3-[(3aS,4S,5R,7aS)-7a-methyl-1,5-dioxo-octahydro-1H-inden-4-yl]propanoate + ATP + CoA = 3-[(3aS,4S,5R,7aS)-5-hydroxy-7a-methyl-1-oxo-octahydro-1H-inden-4-yl]propanoyl-CoA + AMP + diphosphate. In terms of biological role, involved in the catabolism of the rings C and D of cholesterol. Catalyzes the ATP-dependent CoA thioesterification of 3aalpha-H-4alpha(3'-propanoate)-7abeta-methylhexahydro-1,5-indanedione (HIP) to yield HIP-CoA. It can also use the hydroxylated analogs of HIP, 5alpha-OH HIP and 1beta-OH HIP. It requires that the side chain at C17 is completely removed. The polypeptide is 3-[(3aS,4S,7aS)-7a-methyl-1,5-dioxo-octahydro-1H-inden-4-yl]propanoyl:CoA ligase (Mycobacterium tuberculosis (strain ATCC 25618 / H37Rv)).